A 449-amino-acid polypeptide reads, in one-letter code: RNA binding protein fox-1 homolog 2 (449 aa).

The segment covering 1–21 (MAEGGQAQQQPPQLGPGAAAR) has biased composition (low complexity). Residues 1–186 (MAEGGQAQQQ…STPKRLHVSN (186 aa)) are disordered. 2 stretches are compositionally biased toward polar residues: residues 77–86 (QGNQEPTTTP) and 118–138 (YAGQTSEHNLTLYGSTQPHGE). Low complexity predominate over residues 139–176 (QSSNSPSNQNGSLTQTEGGAQTDGQQSQTQSSENSESK). In terms of domain architecture, RRM spans 180 to 256 (KRLHVSNIPF…RKIEVNNATA (77 aa)). Omega-N-methylarginine occurs at positions 236, 241, 268, and 273. Asymmetric dimethylarginine is present on residues Glu285 and Pro317. Residues Leu318, Leu323, Ala336, Arg340, and Gly341 each carry the omega-N-methylarginine modification. 2 positions are modified to asymmetric dimethylarginine: Arg356 and Arg388. 2 positions are modified to asymmetric dimethylarginine; alternate: Arg440 and Arg445. Omega-N-methylarginine; alternate occurs at positions 440 and 445.

In terms of assembly, interacts with ER-alpha N-terminal activation domain. Interacts with RBPMS; the interaction allows cooperative assembly of stable cell-specific alternative splicing regulatory complexes. In terms of tissue distribution, detected in brain neurons (at protein level). Detected in heart, brain, embryo, lung, liver, kidney and ovary.

Its subcellular location is the nucleus. The protein resides in the cytoplasm. In terms of biological role, RNA-binding protein that regulates alternative splicing events by binding to 5'-UGCAUGU-3' elements. Prevents binding of U2AF2 to the 3'-splice site. Regulates alternative splicing of tissue-specific exons and of differentially spliced exons during erythropoiesis. Seems to act as a coregulatory factor of ER-alpha. Together with RNA binding proteins RBPMS and MBNL1/2, activates vascular smooth muscle cells alternative splicing events. In Mus musculus (Mouse), this protein is RNA binding protein fox-1 homolog 2 (Rbfox2).